A 288-amino-acid polypeptide reads, in one-letter code: Beta-lactamase PSE-4 (288 aa).

An N-terminal signal peptide occupies residues 1–17 (MKFLLAFSLLIPSVVFA). S65 serves as the catalytic Acyl-ester intermediate. A disulfide bridge connects residues C72 and C118. Residue 229 to 231 (RSG) participates in substrate binding.

It belongs to the class-A beta-lactamase family.

It carries out the reaction a beta-lactam + H2O = a substituted beta-amino acid. Functionally, hydrolyzes both carbenicillin and oxacillin. The protein is Beta-lactamase PSE-4 (pse4) of Pseudomonas aeruginosa.